The primary structure comprises 569 residues: Sulfite reductase [NADPH] hemoprotein beta-component (569 aa).

4 residues coordinate [4Fe-4S] cluster: cysteine 433, cysteine 439, cysteine 478, and cysteine 482. Position 482 (cysteine 482) interacts with siroheme.

The protein belongs to the nitrite and sulfite reductase 4Fe-4S domain family. Alpha(8)-beta(8). The alpha component is a flavoprotein, the beta component is a hemoprotein. Siroheme serves as cofactor. It depends on [4Fe-4S] cluster as a cofactor.

The catalysed reaction is hydrogen sulfide + 3 NADP(+) + 3 H2O = sulfite + 3 NADPH + 4 H(+). It functions in the pathway sulfur metabolism; hydrogen sulfide biosynthesis; hydrogen sulfide from sulfite (NADPH route): step 1/1. Functionally, component of the sulfite reductase complex that catalyzes the 6-electron reduction of sulfite to sulfide. This is one of several activities required for the biosynthesis of L-cysteine from sulfate. The protein is Sulfite reductase [NADPH] hemoprotein beta-component of Buchnera aphidicola subsp. Acyrthosiphon pisum (strain 5A).